The sequence spans 973 residues: DNA repair protein rhp26 (973 aa).

Residues 35–107 are a coiled coil; the sequence is ESREIEKKRL…DIKRRLNNED (73 aa). The segment at 230–251 is disordered; sequence RDQASASENNKDRGEFEGKDEW. Over residues 238-251 the composition is skewed to basic and acidic residues; the sequence is NNKDRGEFEGKDEW. In terms of domain architecture, Helicase ATP-binding spans 289–490; sequence WELYCQEAGG…WNLFDFVFPG (202 aa). 302–309 contacts ATP; sequence DEMGLGKT. Residues 367–386 form a disordered region; that stretch reads SREKRQYESDASESEAEESK. The DEAH box motif lies at 441 to 444; the sequence is DEGH. The Helicase C-terminal domain maps to 629–789; that stretch reads VIRALLTLWK…RRFFKMTDLH (161 aa). 3 disordered regions span residues 803–846, 863–882, and 930–973; these read ETGS…KGKK, KYKP…STLG, and AVSS…KQRR. A compositionally biased stretch (basic residues) spans 834–846; the sequence is DRKKHKIHDKGKK. Polar residues-rich tracts occupy residues 868–882 and 947–965; these read QESN…STLG and STNV…SSTL.

It localises to the cytoplasm. The protein resides in the nucleus. Functionally, involved in transcription-coupled repair (TCR). The protein is DNA repair protein rhp26 (rhp26) of Schizosaccharomyces pombe (strain 972 / ATCC 24843) (Fission yeast).